The primary structure comprises 426 residues: D-amino acid dehydrogenase (426 aa).

3–17 (VVVLGAGVIGVTTAW) contributes to the FAD binding site.

This sequence belongs to the DadA oxidoreductase family. The cofactor is FAD.

It carries out the reaction a D-alpha-amino acid + A + H2O = a 2-oxocarboxylate + AH2 + NH4(+). The protein operates within amino-acid degradation; D-alanine degradation; NH(3) and pyruvate from D-alanine: step 1/1. Its function is as follows. Oxidative deamination of D-amino acids. This chain is D-amino acid dehydrogenase, found in Phenylobacterium zucineum (strain HLK1).